Here is a 99-residue protein sequence, read N- to C-terminus: UPF0125 protein BU253 (99 aa).

It belongs to the UPF0125 (RnfH) family.

The sequence is that of UPF0125 protein BU253 from Buchnera aphidicola subsp. Acyrthosiphon pisum (strain APS) (Acyrthosiphon pisum symbiotic bacterium).